Reading from the N-terminus, the 449-residue chain is Phosphoglucosamine mutase (449 aa).

The active-site Phosphoserine intermediate is Ser-105. Residues Ser-105, Asp-242, Asp-244, and Asp-246 each coordinate Mg(2+). At Ser-105 the chain carries Phosphoserine.

Belongs to the phosphohexose mutase family. Mg(2+) is required as a cofactor. Post-translationally, activated by phosphorylation.

The enzyme catalyses alpha-D-glucosamine 1-phosphate = D-glucosamine 6-phosphate. In terms of biological role, catalyzes the conversion of glucosamine-6-phosphate to glucosamine-1-phosphate. The chain is Phosphoglucosamine mutase from Clavibacter sepedonicus (Clavibacter michiganensis subsp. sepedonicus).